The primary structure comprises 193 residues: Interleukin-18 (193 aa).

Positions 1 to 36 (MAAEQVEDYCISFVEMKFINNTLYFVAENDEDLESD) are excised as a propeptide.

It belongs to the IL-1 family. In terms of assembly, forms a ternary complex with ligand-binding receptor subunit IL18R1 and signaling receptor subunit IL18RAP at the plasma membrane. Mature IL18 first binds to IL18R1 forming a low affinity binary complex, which then interacts with IL18RAP to form a high affinity ternary complex that signals inside the cell. Interacts with cargo receptor TMED10; the interaction mediates the translocation from the cytoplasm into the ERGIC (endoplasmic reticulum-Golgi intermediate compartment) and thereby secretion. Post-translationally, the pro-IL-18 precursor is processed by CASP1, CASP4 or CASP5 to yield its mature, active form. The pro-IL-18 precursor features autoinhibitory interactions between the propeptide and the post-cleavage-site region, preventing recognition by the IL18R1 receptor. Processing by CASP1, CASP4 or CASP5 induces conformational changes to generate critical receptor-binding sites. The mature form is then secreted and released in the extracellular milieu by passing through the gasdermin-D (GSDMD) pore. In contrast, cleavage by CASP3 inactivates IL18.

Its subcellular location is the cytoplasm. It is found in the cytosol. The protein localises to the secreted. In terms of biological role, pro-inflammatory cytokine primarily involved in epithelial barrier repair, polarized T-helper 1 (Th1) cell and natural killer (NK) cell immune responses. Upon binding to IL18R1 and IL18RAP, forms a signaling ternary complex which activates NF-kappa-B, triggering synthesis of inflammatory mediators. Synergizes with IL12/interleukin-12 to induce IFNG synthesis from T-helper 1 (Th1) cells and natural killer (NK) cells. Involved in transduction of inflammation downstream of pyroptosis: its mature form is specifically released in the extracellular milieu by passing through the gasdermin-D (GSDMD) pore. In Bos taurus (Bovine), this protein is Interleukin-18 (IL18).